A 3242-amino-acid chain; its full sequence is tRNA nuclease CdiA (3242 aa).

The first 32 residues, 1–32 (MHQPPVRFTYRLLSYLISTIIAGQPLLPAVGA), serve as a signal peptide directing secretion. Residues 36–322 (PQNGAGMDKA…AGGNLSVTGT (287 aa)) are two-partner system transport domain (TPS). Residues 351–1376 (GELTAGQNAM…IVVRTGHLLN (1026 aa)) form an FHA-1 region. Positions 1377 to 1668 (QREGFSATTT…TGQTGISDDW (292 aa)) are receptor-binding domain (RBD). Residues 1668–1852 (WPLPSGNNGY…LSPEDITLHN (185 aa)) are YP domain. Positions 1853–1913 (GSVISGNNVQ…DLSAIGDISN (61 aa)) are periplasmic FHA-1 repeat (pFR). An FHA-2 region spans residues 2021 to 2631 (DNSASSTTSQ…TSKYDSKQTS (611 aa)). Basic and acidic residues predominate over residues 2075 to 2091 (RESKNSRNGRSESHESH). 3 disordered regions span residues 2075-2094 (RESKNSRNGRSESHESHAAV), 2310-2333 (GSSKTTHDRREAGTTQSQSASTIG), and 2439-2481 (TMAS…NAGN). Positions 2322-2333 (GTTQSQSASTIG) are enriched in polar residues. The interval 2969 to 3242 (GVDPSKLTED…IESALKGYGI (274 aa)) is DUF638-CT domain; not toxic when added to the outside of E.coli, does not interfere with F-pilus mediated conjugation, toxic when expressed intracellularly. A pre-toxin (PT) domain region spans residues 2972-3015 (PSKLTEDQKQTVSTLATLSAGMAGGIASGDVAGAAAGAGAGKNV). The VENN CT cleavage motif signature appears at 3016–3019 (VENN). Residues 3016–3097 (VENNALSLVA…KYLSSLHDKY (82 aa)) form a toxin import domain; sufficient to import the tRNA nuclease domain of colicin E5 into E.coli, may bind F-pili region. The segment at 3016 to 3242 (VENNALSLVA…IESALKGYGI (227 aa)) is CT domain; toxic when added to the outside of E.coli and when expressed intracellularly. The inner membrane translocation domain (IMTD), targets protein to FtsH stretch occupies residues 3020–3141 (ALSLVARGCA…SENDPKQQNE (122 aa)). The tract at residues 3020 to 3242 (ALSLVARGCA…IESALKGYGI (223 aa)) is C-terminal effector domain (CT). The tRNase function, does not interfere with F-pilus mediated conjugation stretch occupies residues 3098–3242 (GSGAASNPNI…IESALKGYGI (145 aa)). The tract at residues 3116 to 3146 (KVELGGSGSGTGTPPPSENDPKQQNEKTVDK) is disordered. Over residues 3134–3146 (NDPKQQNEKTVDK) the composition is skewed to basic and acidic residues. Positions 3137–3238 (KQQNEKTVDK…AINKIESALK (102 aa)) form a coiled coil. Catalysis depends on residues aspartate 3170, histidine 3193, and glutamate 3196.

The protein in the N-terminal section; belongs to the CdiA toxin family. The C-terminal (CT) domain interacts with cognate CdiI but not non-cognate CdiI from D.dadantii strain 3937. CdiA-CT also interacts with CysK; this is blocked upon preincubation with O-acetyl-L-serine. CysK forms a complex with CdiA-CT/CdiI. One CdiA toxin subunit binds to each subunit of the CysK homodimer, and one CdiI immunity protein binds to each toxin subunit; the immune complex is thus a dimer of trimers. The 4 C-terminal residues of CdiA fit into the active site of CysK. It depends on a divalent metal cation as a cofactor.

It localises to the secreted. The protein localises to the target cell membrane. The protein resides in the target cell. It is found in the target cell cytoplasm. In terms of biological role, toxic component of a toxin-immunity protein module, which functions as a cellular contact-dependent growth inhibition (CDI) system. CDI modules allow bacteria to communicate with and inhibit the growth of closely related neighboring bacteria in a contact-dependent fashion (target cell counts decrease 100- to 1000-fold). CdiA toxicity is neutralized by its cognate immunity protein CdiI, but not by CdiI from other bacteria. Uses heterotrimeric OmpC and OmpF as target cell outer membrane receptors; receptor function depends on polymorphisms in extracellular loops L4 and L5 of OmpC; interacts with itself and closely related bacteria but also with OmpC from E.cloacae ATCC 13047. Its ability to preferentially bind to 'self' receptors suggests it may also play a role in self-recognition and kin selection. A bamA mutation that decreases its expression about 5-fold is partially resistant to this strain of CdiA, probably due to decreased outer membrane receptor protein assembly. Isolated CdiA-CT is imported in an F-pilus-mediated fashion; CdiA-CT inhibits F-mediated conjugation, probably via its N-terminus (residues 3016-3097), although it is not clear if this is physiologically significant. Gains access to the cytoplasm of target cells by using integral inner membrane protein FtsH. The C-terminal domain (CT) cleaves within tRNA anticodon loops; this activity is inhibited by cognate CdiI. tRNase activity of CdiA-CT is stimulated by CysK, although the extreme C-terminus (residues 3098-3242) has tRNase activity in the absence of CysK. In vivo CDI toxicity requires CysK. CysK stabilizes CdiA-CT, allowing it to bind tRNA substrate; neither CdiA-CT nor CysK bind tRNA alone in vitro. Purified CdiA-CT (residues 3016-3242) inhibits E.coli cell growth when added to cultures alone or in complex with cognate CdiI, growth is inhibited when cognate CdiI is present within the cell but not when a CdiA-CT/CdiI complex is added extracellularly, suggesting CdiA-CT alone but not the CdiA-CT/CdiI complex is imported into the target cell. Its function is as follows. The CdiA protein is thought to be exported from the cell through the central lumen of CdiB, the other half of its two-partner system (TPS). The TPS domain probably remains associated with CdiB while the FHA-1 domain forms an extended filament with the receptor-binding domain (RBD) at its extremity; in the secretion arrested state the C-terminus of the RBD and YP domains form a hairpin-like structure as the FHA-2, PT and CT domains are periplasmic. The YP domain is probably responsible for this arrest at the point where it re-enters the host cell periplasm. Upon binding to a target cell outer membrane receptor (heterotrimeric OmpC-OmpF for this CDI) a signal is transmitted to activate secretion. The filament elongates slightly, the rest of CdiA is secreted and the FHA-2 domain becomes stably associated with the target cell's outer membrane where it facilitates entry of the toxic CT domain into the target cell periplasm. From there the toxic CT domain is cleaved and gains access to the target cell cytoplasm via an inner membrane protein (FtsH for this CDI). This chain is tRNA nuclease CdiA, found in Escherichia coli O6:K15:H31 (strain 536 / UPEC).